A 368-amino-acid polypeptide reads, in one-letter code: COP9 signalosome complex subunit 5 (368 aa).

Residues isoleucine 56–glycine 193 enclose the MPN domain. Residues histidine 139, histidine 141, and aspartate 152 each coordinate Zn(2+). Positions histidine 139 to aspartate 152 match the JAMM motif motif. The disordered stretch occupies residues threonine 347–alanine 368.

It belongs to the peptidase M67A family. CSN5 subfamily. Component of the CSN complex, probably composed of csn-1, csn-2, csn-3, csn-4, csn-5, csn-6 and csn-7. Within the complex it probably interacts directly with csn-1. Interacts with glh-1 and glh-3. Interacts with lag-1. Interacts with kgb-1. The cofactor is a divalent metal cation.

It is found in the cytoplasm. It localises to the nucleus. In terms of biological role, probable protease subunit of the COP9 signalosome complex (CSN), a complex involved in various cellular and developmental processes. The CSN complex is an essential regulator of the ubiquitin (Ubl) conjugation pathway by mediating the deneddylation of the cullin subunits of the SCF-type E3 ligase complexes, leading to decrease the Ubl ligase activity of SCF. In the complex, it probably acts as the catalytic center that mediates the cleavage of Nedd8 from cullins. It however has no metalloprotease activity by itself and requires the other subunits of the CSN complex. The CSN complex plays an essential role in embryogenesis and oogenesis and is required to regulate microtubule stability in the early embryo. Mediates mei-3/katanin targeting for degradation at the meiosis to mitosis transition via deneddylation of cul-3. May stabilize glh-1 protein levels by antagonizing kgb-1. This is COP9 signalosome complex subunit 5 (csn-5) from Caenorhabditis elegans.